Here is a 423-residue protein sequence, read N- to C-terminus: Mitogen-activated protein kinase 9 (423 aa).

Positions 26–321 (YQQLKPIGSG…VDEALRHPYI (296 aa)) constitute a Protein kinase domain. Residues 32–40 (IGSGAQGIV) and K55 contribute to the ATP site. D151 functions as the Proton acceptor in the catalytic mechanism. Phosphothreonine; by MAP2K7 is present on T183. The short motif at 183 to 185 (TPY) is the TXY element. Position 185 is a phosphotyrosine; by MAP2K4 (Y185). The segment covering 366-375 (RSKNGVKDQP) has biased composition (basic and acidic residues). The interval 366-423 (RSKNGVKDQPSDAAVSSKATPSQSSSINDISSMSTEHTLASDTDSSLDASTGPLEGCR) is disordered. Low complexity predominate over residues 387-416 (SQSSSINDISSMSTEHTLASDTDSSLDAST).

The protein belongs to the protein kinase superfamily. CMGC Ser/Thr protein kinase family. MAP kinase subfamily. As to quaternary structure, interacts with MECOM. Binds to at least four scaffolding proteins, MAPK8IP1/JIP-1, MAPK8IP2/JIP-2, MAPK8IP3/JIP-3/JSAP1 and SPAG9/MAPK8IP4/JIP-4. These proteins also bind other components of the JNK signaling pathway. Interacts with NFATC4. Interacts with ATF7; the interaction does not phosphorylate ATF7 but acts as a docking site for ATF7-associated partners such as JUN. Interacts with BCL10. Interacts with CTNNB1 and GSK3B. Interacts with DCLK2. Interacts with MAPKBP1. Interacts with POU5F1; phosphorylates POU5F1 at 'Ser-347'. Found in a complex with SH3RF1, RAC2, MAP3K7/TAK1, MAP2K7/MKK7, MAPK8IP1/JIP1 and MAPK8/JNK1. Mg(2+) serves as cofactor. Dually phosphorylated on Thr-183 and Tyr-185 by MAP2K7 and MAP2K4, which activates the enzyme. Autophosphorylated in vitro.

It is found in the cytoplasm. The protein resides in the nucleus. It carries out the reaction L-seryl-[protein] + ATP = O-phospho-L-seryl-[protein] + ADP + H(+). The catalysed reaction is L-threonyl-[protein] + ATP = O-phospho-L-threonyl-[protein] + ADP + H(+). Its activity is regulated as follows. Activated by threonine and tyrosine phosphorylation by either of two dual specificity kinases, MAP2K4 and MAP2K7. MAP2K4 shows a strong preference for Tyr-185 while MAP2K7 phosphorylates Tyr-183 preferentially. Inhibited by dual specificity phosphatases, such as DUSP1. Its function is as follows. Serine/threonine-protein kinase involved in various processes such as cell proliferation, differentiation, migration, transformation and programmed cell death. Extracellular stimuli such as pro-inflammatory cytokines or physical stress stimulate the stress-activated protein kinase/c-Jun N-terminal kinase (SAP/JNK) signaling pathway. In this cascade, two dual specificity kinases MAP2K4/MKK4 and MAP2K7/MKK7 phosphorylate and activate MAPK9/JNK2. In turn, MAPK9/JNK2 phosphorylates a number of transcription factors, primarily components of AP-1 such as JUN and ATF2 and thus regulates AP-1 transcriptional activity. In response to oxidative or ribotoxic stresses, inhibits rRNA synthesis by phosphorylating and inactivating the RNA polymerase 1-specific transcription initiation factor RRN3. Promotes stressed cell apoptosis by phosphorylating key regulatory factors including TP53 and YAP1. In T-cells, MAPK8 and MAPK9 are required for polarized differentiation of T-helper cells into Th1 cells. Upon T-cell receptor (TCR) stimulation, is activated by CARMA1, BCL10, MAP2K7 and MAP3K7/TAK1 to regulate JUN protein levels. Plays an important role in the osmotic stress-induced epithelial tight-junctions disruption. When activated, promotes beta-catenin/CTNNB1 degradation and inhibits the canonical Wnt signaling pathway. Also participates in neurite growth in spiral ganglion neurons. Phosphorylates the CLOCK-BMAL1 heterodimer and plays a role in the regulation of the circadian clock. Phosphorylates POU5F1, which results in the inhibition of POU5F1's transcriptional activity and enhances its proteasomal degradation. Phosphorylates ALKBH5 in response to reactive oxygen species (ROS), promoting ALKBH5 sumoylation and inactivation. This is Mitogen-activated protein kinase 9 (Mapk9) from Rattus norvegicus (Rat).